Here is a 684-residue protein sequence, read N- to C-terminus: Protein LDB19 (684 aa).

Disordered regions lie at residues 462 to 483 (GEAQGEGEGQGEALAEAKPAGL), 510 to 531 (SAEEHSPGLEPDGSTAGADKRI), and 593 to 632 (SSRVVSGPESNPAVRAPVAASPTQPPAVREGPSSLGTSGS). Residues 593-602 (SSRVVSGPES) are compositionally biased toward low complexity.

The protein belongs to the LDB19 family.

The protein localises to the cytoplasm. It localises to the golgi apparatus. Functionally, may be involved in protein-linked oligosaccharide phosphorylation. In Eremothecium gossypii (strain ATCC 10895 / CBS 109.51 / FGSC 9923 / NRRL Y-1056) (Yeast), this protein is Protein LDB19 (LDB19).